The chain runs to 25 residues: Acyl carrier protein (25 aa).

Residues 2-25 enclose the Carrier domain; it reads ESIEQRVKKIVAEQLGVAEAEIKA.

It belongs to the acyl carrier protein (ACP) family. Post-translationally, 4'-phosphopantetheine is transferred from CoA to a specific serine of apo-ACP by AcpS. This modification is essential for activity because fatty acids are bound in thioester linkage to the sulfhydryl of the prosthetic group.

It localises to the cytoplasm. Its pathway is lipid metabolism; fatty acid biosynthesis. Carrier of the growing fatty acid chain in fatty acid biosynthesis. This chain is Acyl carrier protein (acpP), found in Alcaligenes faecalis.